A 229-amino-acid chain; its full sequence is Large ribosomal subunit protein uL1 (229 aa).

This sequence belongs to the universal ribosomal protein uL1 family. As to quaternary structure, part of the 50S ribosomal subunit.

Binds directly to 23S rRNA. The L1 stalk is quite mobile in the ribosome, and is involved in E site tRNA release. Functionally, protein L1 is also a translational repressor protein, it controls the translation of the L11 operon by binding to its mRNA. The chain is Large ribosomal subunit protein uL1 from Lacticaseibacillus casei (strain BL23) (Lactobacillus casei).